The chain runs to 504 residues: Probable chlorophyll(ide) b reductase NYC1, chloroplastic (504 aa).

The transit peptide at 1-33 (MAAAAVVHLSVHGRLRRSPELHARPYHRPSLLR) directs the protein to the chloroplast. A disordered region spans residues 41–63 (ADNGGEEASSSPPPPTTAEARRR). Helical transmembrane passes span 114–134 (YVIT…LSGG) and 141–161 (LIWY…ANSV). 175 to 199 (ITGSTRGLGKALAREFLLSGDRVVI) contributes to the NAD(+) binding site. The active-site Proton acceptor is the Y339. A helical transmembrane segment spans residues 479–499 (WVSVFSLSVVCAFIILSSSGG).

This sequence belongs to the short-chain dehydrogenases/reductases (SDR) family. In terms of assembly, interacts with NOL to form a complex that acts as a chlorophyll b reductase. Expressed in leaves and stems. Also detected in non-photosynthetic tissues such as roots.

The protein localises to the plastid. The protein resides in the chloroplast thylakoid membrane. It carries out the reaction 7(1)-hydroxychlorophyllide a + NAD(+) = chlorophyllide b + NADH + H(+). It catalyses the reaction 7(1)-hydroxychlorophyllide a + NADP(+) = chlorophyllide b + NADPH + H(+). Its function is as follows. Required for proper chloroplast degradation. Involved in chlorophyll b degradation. In Oryza sativa subsp. japonica (Rice), this protein is Probable chlorophyll(ide) b reductase NYC1, chloroplastic (NYC1).